Consider the following 138-residue polypeptide: Phospholipase A2 EC3 (138 aa).

The N-terminal stretch at 1 to 16 (MRTLWIVAVWLMGVEG) is a signal peptide. Disulfide bonds link cysteine 42–cysteine 131, cysteine 44–cysteine 60, cysteine 59–cysteine 111, cysteine 65–cysteine 138, cysteine 66–cysteine 104, cysteine 73–cysteine 97, and cysteine 91–cysteine 102. Ca(2+) contacts are provided by tyrosine 43, glycine 45, and glycine 47. Histidine 63 is a catalytic residue. Aspartate 64 provides a ligand contact to Ca(2+). Aspartate 105 is an active-site residue.

It belongs to the phospholipase A2 family. Group II subfamily. It depends on Ca(2+) as a cofactor.

The protein resides in the secreted. It carries out the reaction a 1,2-diacyl-sn-glycero-3-phosphocholine + H2O = a 1-acyl-sn-glycero-3-phosphocholine + a fatty acid + H(+). Functionally, PA2 catalyzes the calcium-dependent hydrolysis of the 2-acyl groups in 3-sn-phosphoglycerides. The sequence is that of Phospholipase A2 EC3 from Echis coloratus (Carpet viper).